We begin with the raw amino-acid sequence, 67 residues long: Probable Sec-independent protein translocase protein TatE (67 aa).

The helical transmembrane segment at 1 to 21 (MEGISLAKLLIVGALIVLLFG) threads the bilayer. The disordered stretch occupies residues 43–67 (MNDDSDATSKTASEDKNAGQAVHKE). The span at 54 to 67 (ASEDKNAGQAVHKE) shows a compositional bias: basic and acidic residues.

This sequence belongs to the TatA/E family. TatE subfamily.

The protein resides in the cell inner membrane. Functionally, part of the twin-arginine translocation (Tat) system that transports large folded proteins containing a characteristic twin-arginine motif in their signal peptide across membranes. TatE shares overlapping functions with TatA. The polypeptide is Probable Sec-independent protein translocase protein TatE (Erwinia tasmaniensis (strain DSM 17950 / CFBP 7177 / CIP 109463 / NCPPB 4357 / Et1/99)).